A 388-amino-acid chain; its full sequence is Na(+)/H(+) antiporter NhaA (388 aa).

12 helical membrane-spanning segments follow: residues 8–28 (FLKL…IALI), 33–53 (PLQG…FAAL), 59–79 (LLLW…GLEV), 95–115 (LFPV…YLLF), 125–145 (GWAI…ALLS), 154–174 (VFLL…IALF), 179–199 (VSLV…WMNW), 217–237 (VCIL…GFLI), 259–279 (VAYL…LNGV), 287–307 (ILPL…IFLF), 328–348 (IFAV…ISGL), and 363–383 (LGIL…LRMV).

This sequence belongs to the NhaA Na(+)/H(+) (TC 2.A.33) antiporter family.

It localises to the cell inner membrane. The enzyme catalyses Na(+)(in) + 2 H(+)(out) = Na(+)(out) + 2 H(+)(in). Its function is as follows. Na(+)/H(+) antiporter that extrudes sodium in exchange for external protons. This Photorhabdus laumondii subsp. laumondii (strain DSM 15139 / CIP 105565 / TT01) (Photorhabdus luminescens subsp. laumondii) protein is Na(+)/H(+) antiporter NhaA.